A 95-amino-acid chain; its full sequence is Aspartyl/glutamyl-tRNA(Asn/Gln) amidotransferase subunit C (95 aa).

This sequence belongs to the GatC family. In terms of assembly, heterotrimer of A, B and C subunits.

It carries out the reaction L-glutamyl-tRNA(Gln) + L-glutamine + ATP + H2O = L-glutaminyl-tRNA(Gln) + L-glutamate + ADP + phosphate + H(+). It catalyses the reaction L-aspartyl-tRNA(Asn) + L-glutamine + ATP + H2O = L-asparaginyl-tRNA(Asn) + L-glutamate + ADP + phosphate + 2 H(+). Its function is as follows. Allows the formation of correctly charged Asn-tRNA(Asn) or Gln-tRNA(Gln) through the transamidation of misacylated Asp-tRNA(Asn) or Glu-tRNA(Gln) in organisms which lack either or both of asparaginyl-tRNA or glutaminyl-tRNA synthetases. The reaction takes place in the presence of glutamine and ATP through an activated phospho-Asp-tRNA(Asn) or phospho-Glu-tRNA(Gln). In Methylococcus capsulatus (strain ATCC 33009 / NCIMB 11132 / Bath), this protein is Aspartyl/glutamyl-tRNA(Asn/Gln) amidotransferase subunit C.